Here is a 208-residue protein sequence, read N- to C-terminus: MKELKDHVVVITYGPSSEASVTASPVSQQTPSLFAYSVTPSASRFSSRRASVHVIGLVLRFITMVLCFVSALSLAVNVQRPSKRHLTQNSSSFASYPELLYCFGVAVIGFVYTSLQTFKGVCDITHRGVLISEPLSDYISFIFDQVICYLLVSSSSVAIAWIQHINEDAIKTLRNNSIVSVSMSFSAFLVLTLSGLLSGYKLCKRFMW.

Residues 1–53 are Cytoplasmic-facing; that stretch reads MKELKDHVVVITYGPSSEASVTASPVSQQTPSLFAYSVTPSASRFSSRRASVH. A helical membrane pass occupies residues 54 to 74; that stretch reads VIGLVLRFITMVLCFVSALSL. The Extracellular segment spans residues 75-92; it reads AVNVQRPSKRHLTQNSSS. The N-linked (GlcNAc...) asparagine glycan is linked to Asn89. Residues 93-113 form a helical membrane-spanning segment; it reads FASYPELLYCFGVAVIGFVYT. The Cytoplasmic segment spans residues 114-141; it reads SLQTFKGVCDITHRGVLISEPLSDYISF. The chain crosses the membrane as a helical span at residues 142-162; it reads IFDQVICYLLVSSSSVAIAWI. Residues 163-176 are Extracellular-facing; sequence QHINEDAIKTLRNN. N-linked (GlcNAc...) asparagine glycosylation is present at Asn175. The helical transmembrane segment at 177-197 threads the bilayer; it reads SIVSVSMSFSAFLVLTLSGLL. At 198 to 208 the chain is on the cytoplasmic side; sequence SGYKLCKRFMW.

It belongs to the Casparian strip membrane proteins (CASP) family. Homodimer and heterodimers.

The protein resides in the cell membrane. The polypeptide is CASP-like protein 4A4 (Arabidopsis thaliana (Mouse-ear cress)).